A 182-amino-acid polypeptide reads, in one-letter code: CDP-diacylglycerol--glycerol-3-phosphate 3-phosphatidyltransferase (182 aa).

The Cytoplasmic portion of the chain corresponds to 2-12 (QFNIPTLLTLF). The helical transmembrane segment at 13–37 (RVILIPFFVVVFYLPFAWAPMVSAL) threads the bilayer. Residues 38-60 (IFCIAAITDWFDGFLARRWNQST) are Periplasmic-facing. Residues 61 to 81 (RFGAFLDPVADKVLVAIAMVL) form a helical membrane-spanning segment. At 82–86 (VTEHY) the chain is on the cytoplasmic side. Residues 87–107 (HSWWVTLPAATMIAREIIISA) form a helical membrane-spanning segment. The Periplasmic portion of the chain corresponds to 108–145 (LREWMAELGKRSSVAVSWIGKVKTTAQMVALAWLLWRP). The chain crosses the membrane as a helical span at residues 146-168 (NIWVEYAGIALFFVAAVLTLWSM). At 169 to 181 (LQYLSAARGDLLD) the chain is on the cytoplasmic side.

Belongs to the CDP-alcohol phosphatidyltransferase class-I family.

It localises to the cell inner membrane. It carries out the reaction a CDP-1,2-diacyl-sn-glycerol + sn-glycerol 3-phosphate = a 1,2-diacyl-sn-glycero-3-phospho-(1'-sn-glycero-3'-phosphate) + CMP + H(+). It functions in the pathway phospholipid metabolism; phosphatidylglycerol biosynthesis; phosphatidylglycerol from CDP-diacylglycerol: step 1/2. In terms of biological role, catalyzes the conversion of cytidine diphosphate diacylglycerol (CDP-DG) and glycerol 3-phosphate into phosphatidylglycerol. Essential for the synthesis of anionic phospholipids, thereby playing a role in balancing the ratio of zwitterionic and anionic phospholipids, which is thought to be important for normal membrane function. The chain is CDP-diacylglycerol--glycerol-3-phosphate 3-phosphatidyltransferase from Salmonella paratyphi A (strain ATCC 9150 / SARB42).